The sequence spans 688 residues: Elongation factor G (688 aa).

One can recognise a tr-type G domain in the interval 8 to 282; that stretch reads KNFRNFGIMA…AVVDFLPSPV (275 aa). Residues 17-24, 81-85, and 135-138 each bind GTP; these read AHIDAGKT, DTPGH, and NKMD.

The protein belongs to the TRAFAC class translation factor GTPase superfamily. Classic translation factor GTPase family. EF-G/EF-2 subfamily.

The protein localises to the cytoplasm. Catalyzes the GTP-dependent ribosomal translocation step during translation elongation. During this step, the ribosome changes from the pre-translocational (PRE) to the post-translocational (POST) state as the newly formed A-site-bound peptidyl-tRNA and P-site-bound deacylated tRNA move to the P and E sites, respectively. Catalyzes the coordinated movement of the two tRNA molecules, the mRNA and conformational changes in the ribosome. The chain is Elongation factor G (fusA) from Mycoplasma genitalium (strain ATCC 33530 / DSM 19775 / NCTC 10195 / G37) (Mycoplasmoides genitalium).